Consider the following 154-residue polypeptide: SsrA-binding protein (154 aa).

The protein belongs to the SmpB family.

It localises to the cytoplasm. In terms of biological role, required for rescue of stalled ribosomes mediated by trans-translation. Binds to transfer-messenger RNA (tmRNA), required for stable association of tmRNA with ribosomes. tmRNA and SmpB together mimic tRNA shape, replacing the anticodon stem-loop with SmpB. tmRNA is encoded by the ssrA gene; the 2 termini fold to resemble tRNA(Ala) and it encodes a 'tag peptide', a short internal open reading frame. During trans-translation Ala-aminoacylated tmRNA acts like a tRNA, entering the A-site of stalled ribosomes, displacing the stalled mRNA. The ribosome then switches to translate the ORF on the tmRNA; the nascent peptide is terminated with the 'tag peptide' encoded by the tmRNA and targeted for degradation. The ribosome is freed to recommence translation, which seems to be the essential function of trans-translation. The sequence is that of SsrA-binding protein from Synechococcus sp. (strain JA-3-3Ab) (Cyanobacteria bacterium Yellowstone A-Prime).